Here is a 163-residue protein sequence, read N- to C-terminus: Photosystem II extrinsic protein V (163 aa).

An N-terminal signal peptide occupies residues 1 to 26; sequence MFKTYSKSFACILFCIFNIFVVSASA. C63, C66, H67, and M130 together coordinate heme c.

Belongs to the cytochrome c family. PsbV subfamily. PSII is composed of 1 copy each of membrane proteins PsbA, PsbB, PsbC, PsbD, PsbE, PsbF, PsbH, PsbI, PsbJ, PsbK, PsbL, PsbM, PsbT, PsbY, PsbZ, Psb30/Ycf12, at least 3 peripheral proteins of the oxygen-evolving complex and a large number of cofactors. It forms dimeric complexes. The cofactor is heme c.

It is found in the plastid. It localises to the chloroplast thylakoid membrane. Functionally, one of the extrinsic, lumenal subunits of photosystem II (PSII). PSII is a light-driven water plastoquinone oxidoreductase, using light energy to abstract electrons from H(2)O, generating a proton gradient subsequently used for ATP formation. The extrinsic proteins stabilize the structure of photosystem II oxygen-evolving complex (OEC), the ion environment of oxygen evolution and protect the OEC against heat-induced inactivation. The sequence is that of Photosystem II extrinsic protein V from Thalassiosira pseudonana (Marine diatom).